Consider the following 615-residue polypeptide: 1-deoxy-D-xylulose-5-phosphate synthase (615 aa).

Thiamine diphosphate contacts are provided by residues His-72 and 111–113 (GHS). Asp-142 is a Mg(2+) binding site. Residues 143–144 (GA), Asn-171, Tyr-278, and Glu-360 contribute to the thiamine diphosphate site. Asn-171 contributes to the Mg(2+) binding site.

The protein belongs to the transketolase family. DXPS subfamily. In terms of assembly, homodimer. Requires Mg(2+) as cofactor. Thiamine diphosphate serves as cofactor.

The enzyme catalyses D-glyceraldehyde 3-phosphate + pyruvate + H(+) = 1-deoxy-D-xylulose 5-phosphate + CO2. It participates in metabolic intermediate biosynthesis; 1-deoxy-D-xylulose 5-phosphate biosynthesis; 1-deoxy-D-xylulose 5-phosphate from D-glyceraldehyde 3-phosphate and pyruvate: step 1/1. In terms of biological role, catalyzes the acyloin condensation reaction between C atoms 2 and 3 of pyruvate and glyceraldehyde 3-phosphate to yield 1-deoxy-D-xylulose-5-phosphate (DXP). The protein is 1-deoxy-D-xylulose-5-phosphate synthase of Campylobacter jejuni subsp. jejuni serotype O:6 (strain 81116 / NCTC 11828).